The chain runs to 268 residues: MQKRDGHIHTPFCPHGSNDTLRQYAEEALKKGFESITFTEHAPLPPSFTDPTPLKDSAMAQASLERYIHEISGLKKEYRGQLSIRTGLEVDYIAEFEDEITLFLDTYGPYLDDSILSVHFLRTDSSYLCLDYDEHTFKELISACGSIEAVYEQYYRSIYSSIVASLGVYKPKRVGHITLVQKFIKLFPYSMSEHIRGLVSLCLNAIEENGMELDFNTSGLRKTYAGGIYIEDWMLNEAKQKKIPLVFGSDAHQAGDVGYAYEAFLERC.

It belongs to the PHP hydrolase family. HisK subfamily.

It catalyses the reaction L-histidinol phosphate + H2O = L-histidinol + phosphate. It functions in the pathway amino-acid biosynthesis; L-histidine biosynthesis; L-histidine from 5-phospho-alpha-D-ribose 1-diphosphate: step 8/9. The chain is Histidinol-phosphatase (hisK) from Bacillus subtilis (strain 168).